The following is a 312-amino-acid chain: DNA-directed RNA polymerase subunit alpha (312 aa).

The interval 1–226 is alpha N-terminal domain (alpha-NTD); sequence MIEFEKPIIT…EHLNLFTDLT (226 aa). An alpha C-terminal domain (alpha-CTD) region spans residues 243 to 312; the sequence is DEKVLDRTIE…DLGLGLKNDK (70 aa).

It belongs to the RNA polymerase alpha chain family. As to quaternary structure, homodimer. The RNAP catalytic core consists of 2 alpha, 1 beta, 1 beta' and 1 omega subunit. When a sigma factor is associated with the core the holoenzyme is formed, which can initiate transcription.

The catalysed reaction is RNA(n) + a ribonucleoside 5'-triphosphate = RNA(n+1) + diphosphate. DNA-dependent RNA polymerase catalyzes the transcription of DNA into RNA using the four ribonucleoside triphosphates as substrates. In Streptococcus mutans serotype c (strain ATCC 700610 / UA159), this protein is DNA-directed RNA polymerase subunit alpha.